Here is a 292-residue protein sequence, read N- to C-terminus: Acetylglutamate kinase (292 aa).

Residues 64 to 65 (GG), Arg-86, and Asn-190 each bind substrate.

It belongs to the acetylglutamate kinase family. ArgB subfamily.

It localises to the cytoplasm. It carries out the reaction N-acetyl-L-glutamate + ATP = N-acetyl-L-glutamyl 5-phosphate + ADP. Its pathway is amino-acid biosynthesis; L-arginine biosynthesis; N(2)-acetyl-L-ornithine from L-glutamate: step 2/4. In terms of biological role, catalyzes the ATP-dependent phosphorylation of N-acetyl-L-glutamate. The protein is Acetylglutamate kinase of Trichlorobacter lovleyi (strain ATCC BAA-1151 / DSM 17278 / SZ) (Geobacter lovleyi).